The primary structure comprises 1214 residues: ATP-dependent helicase/nuclease subunit A (1214 aa).

Residues 27–483 form the UvrD-like helicase ATP-binding domain; the sequence is HKRTAQQIEA…ILLKENFRSQ (457 aa). 48 to 55 contacts ATP; sequence ASAGSGKT. A UvrD-like helicase C-terminal domain is found at 512-800; it reads QLVAGSEAQK…NLMTIHKSKG (289 aa).

This sequence belongs to the helicase family. AddA subfamily. As to quaternary structure, heterodimer of AddA and AddB/RexB. Requires Mg(2+) as cofactor.

It catalyses the reaction Couples ATP hydrolysis with the unwinding of duplex DNA by translocating in the 3'-5' direction.. The catalysed reaction is ATP + H2O = ADP + phosphate + H(+). Functionally, the heterodimer acts as both an ATP-dependent DNA helicase and an ATP-dependent, dual-direction single-stranded exonuclease. Recognizes the chi site generating a DNA molecule suitable for the initiation of homologous recombination. The AddA nuclease domain is required for chi fragment generation; this subunit has the helicase and 3' -&gt; 5' nuclease activities. The polypeptide is ATP-dependent helicase/nuclease subunit A (Streptococcus equi subsp. zooepidemicus (strain MGCS10565)).